A 473-amino-acid chain; its full sequence is Vasculin (473 aa).

3 disordered regions span residues 1 to 25 (MAQH…SSLN), 44 to 170 (RRRH…SRTP), and 186 to 341 (SGFP…HQER). Ser-49 carries the phosphoserine modification. Omega-N-methylarginine is present on Arg-87. The segment covering 94 to 117 (NSRSRSSIFHSGKSQGLHENSIPD) has biased composition (polar residues). Positions 119–133 (ETGRKEDKRERRQFE) are enriched in basic and acidic residues. Composition is skewed to polar residues over residues 193–204 (NLQSQPVKNGTG) and 248–286 (NFNT…QQPR). A phosphoserine mark is found at Ser-274, Ser-276, Ser-322, and Ser-381. The segment covering 293 to 329 (MRSDKKSEFLKALKRDRVEEEHEDESHAGSEKDDDSF) has biased composition (basic and acidic residues). The disordered stretch occupies residues 450–473 (TFKPTIENDDTETSSSDTSDDDDV). Positions 456–473 (ENDDTETSSSDTSDDDDV) are enriched in acidic residues.

It belongs to the vasculin family. As to quaternary structure, interacts with GTF2B, GTF2F2, RNA polymerase II and TBP. As to expression, ubiquitously expressed (at protein level).

The protein resides in the nucleus. In terms of biological role, functions as a GC-rich promoter-specific transactivating transcription factor. In Mus musculus (Mouse), this protein is Vasculin (Gpbp1).